The sequence spans 140 residues: Small ribosomal subunit protein uS12 (140 aa).

Residue aspartate 103 is modified to 3-methylthioaspartic acid. The interval 120-140 (GVQKRMQARSKYGAKRPKKGK) is disordered. The segment covering 125–140 (MQARSKYGAKRPKKGK) has biased composition (basic residues).

The protein belongs to the universal ribosomal protein uS12 family. In terms of assembly, part of the 30S ribosomal subunit. Contacts proteins S8 and S17. May interact with IF1 in the 30S initiation complex.

Functionally, with S4 and S5 plays an important role in translational accuracy. Interacts with and stabilizes bases of the 16S rRNA that are involved in tRNA selection in the A site and with the mRNA backbone. Located at the interface of the 30S and 50S subunits, it traverses the body of the 30S subunit contacting proteins on the other side and probably holding the rRNA structure together. The combined cluster of proteins S8, S12 and S17 appears to hold together the shoulder and platform of the 30S subunit. The sequence is that of Small ribosomal subunit protein uS12 from Desulfitobacterium hafniense (strain Y51).